The chain runs to 693 residues: Elongation factor G (693 aa).

The tr-type G domain occupies 8-282; that stretch reads EKTRNIGIMA…AVIDYLPSPL (275 aa). Residues 17–24, 81–85, and 135–138 contribute to the GTP site; these read AHVDAGKT, DTPGH, and NKMD.

Belongs to the TRAFAC class translation factor GTPase superfamily. Classic translation factor GTPase family. EF-G/EF-2 subfamily.

It localises to the cytoplasm. Functionally, catalyzes the GTP-dependent ribosomal translocation step during translation elongation. During this step, the ribosome changes from the pre-translocational (PRE) to the post-translocational (POST) state as the newly formed A-site-bound peptidyl-tRNA and P-site-bound deacylated tRNA move to the P and E sites, respectively. Catalyzes the coordinated movement of the two tRNA molecules, the mRNA and conformational changes in the ribosome. This Streptococcus pneumoniae (strain Hungary19A-6) protein is Elongation factor G.